The sequence spans 492 residues: NADH-quinone oxidoreductase subunit N (492 aa).

14 helical membrane-spanning segments follow: residues 12–32, 44–64, 76–96, 115–135, 138–158, 169–189, 212–232, 244–264, 272–292, 306–326, 334–354, 381–401, 416–438, and 463–483; these read LLPY…MIAI, ISVV…AGII, LFVI…CALA, LYLL…AQHL, FFMS…YTYM, YLVL…FIYA, LILG…AAPF, PAPI…ALAV, LLAL…SILL, LLGY…VSIG, SMYM…VTLM, TAVM…AGFI, WFLA…RVLL, and IMVI…NSMI.

This sequence belongs to the complex I subunit 2 family. NDH-1 is composed of 14 different subunits. Subunits NuoA, H, J, K, L, M, N constitute the membrane sector of the complex.

The protein localises to the cell inner membrane. The catalysed reaction is a quinone + NADH + 5 H(+)(in) = a quinol + NAD(+) + 4 H(+)(out). In terms of biological role, NDH-1 shuttles electrons from NADH, via FMN and iron-sulfur (Fe-S) centers, to quinones in the respiratory chain. The immediate electron acceptor for the enzyme in this species is believed to be ubiquinone. Couples the redox reaction to proton translocation (for every two electrons transferred, four hydrogen ions are translocated across the cytoplasmic membrane), and thus conserves the redox energy in a proton gradient. The polypeptide is NADH-quinone oxidoreductase subunit N (Psychrobacter arcticus (strain DSM 17307 / VKM B-2377 / 273-4)).